Reading from the N-terminus, the 376-residue chain is Palmitoyltransferase PFA4 (376 aa).

Topologically, residues 1-11 (MPVKLKWPWLG) are cytoplasmic. A helical membrane pass occupies residues 12-32 (IAIPSFLIASIGYCAHYFILL). The Lumenal portion of the chain corresponds to 33–40 (NFLSLRKQ). The chain crosses the membrane as a helical span at residues 41–61 (LWYQFCQTMIWLSYYLAIYTP). The Cytoplasmic segment spans residues 62–122 (PGKPPTNFKP…NCVGYNNFPH (61 aa)). In terms of domain architecture, DHHC spans 78 to 128 (VYCKKCKCYKPERSHHCKTCNQCVLMMDHHCPWTMNCVGYNNFPHFIRFLF). The S-palmitoyl cysteine intermediate role is filled by Cys-108. Residues 123 to 143 (FIRFLFWVIVGTTSLAIFLTT) form a helical membrane-spanning segment. Residues 144-163 (RIHSIWVHRSSPSYLYYKSE) are Lumenal-facing. A helical membrane pass occupies residues 164 to 184 (LIFLTILTPLNAFILLTISIL). The Cytoplasmic portion of the chain corresponds to 185-376 (MIRCLFNQIF…EDFGVDVDVE (192 aa)).

The protein belongs to the DHHC palmitoyltransferase family. PFA4 subfamily.

The protein localises to the endoplasmic reticulum membrane. The catalysed reaction is L-cysteinyl-[protein] + hexadecanoyl-CoA = S-hexadecanoyl-L-cysteinyl-[protein] + CoA. Its function is as follows. Mediates the reversible addition of palmitate to target proteins, thereby regulating their membrane association and biological function. This is Palmitoyltransferase PFA4 from Candida glabrata (strain ATCC 2001 / BCRC 20586 / JCM 3761 / NBRC 0622 / NRRL Y-65 / CBS 138) (Yeast).